The chain runs to 153 residues: 6,7-dimethyl-8-ribityllumazine synthase (153 aa).

5-amino-6-(D-ribitylamino)uracil-binding positions include phenylalanine 22, 56–58 (AFE), and 80–82 (AVI). A (2S)-2-hydroxy-3-oxobutyl phosphate-binding site is contributed by 85–86 (ST). Histidine 88 serves as the catalytic Proton donor. Residue phenylalanine 113 coordinates 5-amino-6-(D-ribitylamino)uracil. Arginine 127 contacts (2S)-2-hydroxy-3-oxobutyl phosphate.

It belongs to the DMRL synthase family.

It carries out the reaction (2S)-2-hydroxy-3-oxobutyl phosphate + 5-amino-6-(D-ribitylamino)uracil = 6,7-dimethyl-8-(1-D-ribityl)lumazine + phosphate + 2 H2O + H(+). It functions in the pathway cofactor biosynthesis; riboflavin biosynthesis; riboflavin from 2-hydroxy-3-oxobutyl phosphate and 5-amino-6-(D-ribitylamino)uracil: step 1/2. Catalyzes the formation of 6,7-dimethyl-8-ribityllumazine by condensation of 5-amino-6-(D-ribitylamino)uracil with 3,4-dihydroxy-2-butanone 4-phosphate. This is the penultimate step in the biosynthesis of riboflavin. This Fusobacterium nucleatum subsp. nucleatum (strain ATCC 25586 / DSM 15643 / BCRC 10681 / CIP 101130 / JCM 8532 / KCTC 2640 / LMG 13131 / VPI 4355) protein is 6,7-dimethyl-8-ribityllumazine synthase.